Consider the following 510-residue polypeptide: Pre-glycoprotein polyprotein GP complex (510 aa).

Gly-2 carries the N-myristoyl glycine; by host lipid modification. Residues Gly-2–Met-17 lie on the Extracellular side of the membrane. A helical transmembrane segment spans residues Ala-18–Thr-32. Residue Lys-33 is a topological domain, cytoplasmic. Residues Gly-34–Ala-53 traverse the membrane as a helical segment. Extracellular segments lie at residues Gly-54 to Asp-58 and Gly-59 to Asp-448. A Zn(2+)-binding site is contributed by Cys-57. N-linked (GlcNAc...) asparagine; by host glycans are attached at residues Asn-75, Asn-90, Asn-101, Asn-112, Asn-117, Asn-122, Asn-133, Asn-182, Asn-218, and Asn-243. 4 cysteine pairs are disulfide-bonded: Cys-87–Cys-250, Cys-295–Cys-308, Cys-317–Cys-326, and Cys-380–Cys-401. N-linked (GlcNAc...) asparagine; by host glycosylation is found at Asn-381, Asn-389, Asn-406, and Asn-411. Residues Leu-449–Pro-469 traverse the membrane as a helical segment. The Cytoplasmic portion of the chain corresponds to Thr-470 to Lys-510. Positions 471, 473, 479, 483, 491, and 493 each coordinate Zn(2+).

Belongs to the arenaviridae GPC protein family. Homotetramer; disulfide-linked. In terms of assembly, homotetramer. GP2 homotetramers bind through ionic interactions with GP1 homotetramers to form the GP complex together with the stable signal peptide. The GP-C polyprotein interacts with the host protease MBTPS1/SKI-1 resulting in the polyprotein processing. Post-translationally, specific enzymatic cleavages in vivo yield mature proteins. GP-C polyprotein is cleaved in the endoplasmic reticulum by the host protease MBTPS1. Only cleaved glycoprotein is incorporated into virions. In terms of processing, the SSP remains stably associated with the GP complex following cleavage by signal peptidase and plays crucial roles in the trafficking of GP through the secretory pathway. Myristoylation is necessary for GP2-mediated fusion activity.

It is found in the virion membrane. The protein localises to the host endoplasmic reticulum membrane. It localises to the host Golgi apparatus membrane. The protein resides in the host cell membrane. In terms of biological role, class I viral fusion protein that directs fusion of viral and host endosomal membranes, leading to delivery of the nucleocapsid into the cytoplasm. Membrane fusion is mediated by irreversible conformational changes induced upon acidification in the endosome. Its function is as follows. Stable signal peptide (SSP): cleaved and functions as a signal peptide. In addition, it is also retained as the third component of the GP complex. The SSP is required for efficient glycoprotein expression, post-translational maturation cleavage of GP1 and GP2, glycoprotein transport to the cell surface plasma membrane, formation of infectious virus particles, and acid pH-dependent glycoprotein-mediated cell fusion. Functionally, interacts with the host receptor. The polypeptide is Pre-glycoprotein polyprotein GP complex (Pirital mammarenavirus (isolate Rat/Venezuela/VAV-488/1995) (PIRV)).